The sequence spans 218 residues: Phosphatidylserine decarboxylase proenzyme (218 aa).

The active-site Schiff-base intermediate with substrate; via pyruvic acid is serine 182. The residue at position 182 (serine 182) is a Pyruvic acid (Ser); by autocatalysis.

This sequence belongs to the phosphatidylserine decarboxylase family. PSD-A subfamily. Heterodimer of a large membrane-associated beta subunit and a small pyruvoyl-containing alpha subunit. It depends on pyruvate as a cofactor. In terms of processing, is synthesized initially as an inactive proenzyme. Formation of the active enzyme involves a self-maturation process in which the active site pyruvoyl group is generated from an internal serine residue via an autocatalytic post-translational modification. Two non-identical subunits are generated from the proenzyme in this reaction, and the pyruvate is formed at the N-terminus of the alpha chain, which is derived from the carboxyl end of the proenzyme. The post-translation cleavage follows an unusual pathway, termed non-hydrolytic serinolysis, in which the side chain hydroxyl group of the serine supplies its oxygen atom to form the C-terminus of the beta chain, while the remainder of the serine residue undergoes an oxidative deamination to produce ammonia and the pyruvoyl prosthetic group on the alpha chain.

It localises to the cell membrane. The enzyme catalyses a 1,2-diacyl-sn-glycero-3-phospho-L-serine + H(+) = a 1,2-diacyl-sn-glycero-3-phosphoethanolamine + CO2. It functions in the pathway phospholipid metabolism; phosphatidylethanolamine biosynthesis; phosphatidylethanolamine from CDP-diacylglycerol: step 2/2. Functionally, catalyzes the formation of phosphatidylethanolamine (PtdEtn) from phosphatidylserine (PtdSer). This Oleidesulfovibrio alaskensis (strain ATCC BAA-1058 / DSM 17464 / G20) (Desulfovibrio alaskensis) protein is Phosphatidylserine decarboxylase proenzyme.